The sequence spans 97 residues: MMSGRRSWPAMATVLLTLLVCLGELVDAYPAKPQAPGEHASPDELNRYYTSLRHYLNLVTRQRFGKRDFSEALLSILLFPDREDPPVKSRPEGAYLW.

The N-terminal stretch at 1-28 is a signal peptide; sequence MMSGRRSWPAMATVLLTLLVCLGELVDA. A Phosphoserine modification is found at Ser-41. At Phe-64 the chain carries Phenylalanine amide. Positions 68–97 are excised as a propeptide; that stretch reads DFSEALLSILLFPDREDPPVKSRPEGAYLW.

This sequence belongs to the NPY family.

It is found in the secreted. In terms of biological role, this gut peptide inhibits exocrine pancreatic secretion, has a vasoconstrictory action and inhibitis jejunal and colonic mobility. In Bos taurus (Bovine), this protein is Peptide YY (PYY).